Reading from the N-terminus, the 390-residue chain is Lipid-A-disaccharide synthase (390 aa).

This sequence belongs to the LpxB family.

It carries out the reaction a lipid X + a UDP-2-N,3-O-bis[(3R)-3-hydroxyacyl]-alpha-D-glucosamine = a lipid A disaccharide + UDP + H(+). It functions in the pathway bacterial outer membrane biogenesis; LPS lipid A biosynthesis. In terms of biological role, condensation of UDP-2,3-diacylglucosamine and 2,3-diacylglucosamine-1-phosphate to form lipid A disaccharide, a precursor of lipid A, a phosphorylated glycolipid that anchors the lipopolysaccharide to the outer membrane of the cell. In Haemophilus influenzae (strain 86-028NP), this protein is Lipid-A-disaccharide synthase.